The chain runs to 618 residues: Rho guanine nucleotide exchange factor 25 (618 aa).

Disordered stretches follow at residues 26–63 (CAVP…REPE) and 169–193 (GPGD…EEQK). Residues 199–375 (RSMFVLGELV…CFVPKRCNDM (177 aa)) enclose the DH domain. An important for binding to Rho GTPases region spans residues 317–338 (LGHRLQLNDLLIKPVQRIMKYQ). The 119-residue stretch at 387 to 505 (KLTAQGKLLG…WIKQVAQILE (119 aa)) folds into the PH domain. Residues 506–532 (SQRDFLNALQSPIEYQRRESQTNSLGR) are sufficient to bind activated GNAQ. Disordered regions lie at residues 521–556 (QRRE…SMHT) and 584–604 (ALSD…VNTP). The span at 584 to 593 (ALSDTPQTPH) shows a compositional bias: polar residues.

Interacts with activated GNAQ and GNA11. Interacts (via the DH domain) with POPDC1 (via the C-terminus cytoplasmic tail). Interacts with RHOA, CDC42 and RAC1. In terms of tissue distribution, highly expressed in excitable tissues, such as brain, heart and muscle. Elevated expression in hippocampus and cerebellum.

The protein localises to the cytoplasm. Its subcellular location is the myofibril. It localises to the sarcomere. The protein resides in the cell membrane. May play a role in actin cytoskeleton reorganization in different tissues since its activation induces formation of actin stress fibers. It works as a guanine nucleotide exchange factor for Rho family of small GTPases. Links specifically G alpha q/11-coupled receptors to RHOA activation. May be an important regulator of processes involved in axon and dendrite formation. In neurons seems to be an exchange factor primarily for RAC1. Involved in skeletal myogenesis. The sequence is that of Rho guanine nucleotide exchange factor 25 (Arhgef25) from Mus musculus (Mouse).